The primary structure comprises 344 residues: Interactor of constitutive active ROPs 1 (344 aa).

Disordered stretches follow at residues 1-74 (MPRP…ESQL), 92-139 (EAVK…KETD), 186-218 (HESL…DEMV), and 307-344 (FMDP…KGQK). The segment covering 19 to 29 (SSSSTSDSNHS) has biased composition (low complexity). Residues 60 to 108 (QKKLGGRISDLESQLGQAQEELRLLKEQLANAEAVKKQAQDELHKKSKK) adopt a coiled-coil conformation. 3 stretches are compositionally biased toward basic and acidic residues: residues 93-103 (AVKKQAQDELH), 114-139 (RVEE…KETD), and 186-195 (HESLGKENES). Residues 145–273 (VEKIAVEEEE…EQWRKAADAA (129 aa)) adopt a coiled-coil conformation. The span at 196-211 (LKNQLSDSASEISNVK) shows a compositional bias: polar residues.

It belongs to the ICR family. Homooligomer. Interacts with ARAC3, ARAC4, ARAC8, ARAC11 and SEC3A, but not with ICR2 or EXO70A1. As to expression, expressed in mature and germinating pollen. Expressed throughout the embryo but not in the hypophysis and quiescent center (QC). In roots, absent from the QC and the stem cells.

The protein resides in the cell membrane. The protein localises to the nucleus. In terms of biological role, acts as a scaffold, mediating interaction of ROPs with different proteins. Required for primary and adventitious root maintenance, but not for their formation. Promotes the stabilization of ARAC11 on the plasma membrane of the pollen tube initiation site but not the activation of ARAC11. Regulates directionality of polar auxin transport, and is required for the formation of a stable auxin maximum and tip localized auxin gradient during embryogenesis, organogenesis, and meristem activity. Involved in exocytosis and in the recycling of PIN proteins back to the plasma membrane. This is Interactor of constitutive active ROPs 1 (ICR1) from Arabidopsis thaliana (Mouse-ear cress).